A 216-amino-acid polypeptide reads, in one-letter code: Large ribosomal subunit protein uL1 (216 aa).

The protein belongs to the universal ribosomal protein uL1 family.

The chain is Large ribosomal subunit protein uL1 from Caenorhabditis elegans.